A 113-amino-acid chain; its full sequence is DVVMTQTPLSLPVSLGDQASISCRSSQSLVHSNGNTYLNWYLQKAGQSPKLLIYKVSNRFSGVPDRFSGSGSGTDFTLKISRVEAEDLGIYFCSQTTHVPPTFGGGTKLEIKR.

Residues 1–23 (DVVMTQTPLSLPVSLGDQASISC) are framework-1. An intrachain disulfide couples Cys23 to Cys93. The segment at 24–39 (RSSQSLVHSNGNTYLN) is complementarity-determining-1. A framework-2 region spans residues 40–54 (WYLQKAGQSPKLLIY). The complementarity-determining-2 stretch occupies residues 55–61 (KVSNRFS). The tract at residues 62 to 93 (GVPDRFSGSGSGTDFTLKISRVEAEDLGIYFC) is framework-3. The complementarity-determining-3 stretch occupies residues 94–102 (SQTTHVPPT). Residues 103–112 (FGGGTKLEIK) form a framework-4 region.

This is Ig kappa chain V-II region 26-10 from Mus musculus (Mouse).